The primary structure comprises 461 residues: Argininosuccinate lyase (461 aa).

It belongs to the lyase 1 family. Argininosuccinate lyase subfamily.

The protein localises to the cytoplasm. It catalyses the reaction 2-(N(omega)-L-arginino)succinate = fumarate + L-arginine. Its pathway is amino-acid biosynthesis; L-arginine biosynthesis; L-arginine from L-ornithine and carbamoyl phosphate: step 3/3. This chain is Argininosuccinate lyase, found in Chlorobium luteolum (strain DSM 273 / BCRC 81028 / 2530) (Pelodictyon luteolum).